The chain runs to 240 residues: 4-hydroxy-tetrahydrodipicolinate reductase (240 aa).

7-12 is an NAD(+) binding site; sequence GLSGTM. Lys35 contributes to the NADP(+) binding site. NAD(+) contacts are provided by residues 74–76 and 98–101; these read GTT and ATNM. His131 serves as the catalytic Proton donor/acceptor. Residue His132 participates in (S)-2,3,4,5-tetrahydrodipicolinate binding. The Proton donor role is filled by Lys135. (S)-2,3,4,5-tetrahydrodipicolinate is bound at residue 141-142; sequence GS.

Belongs to the DapB family.

Its subcellular location is the cytoplasm. The catalysed reaction is (S)-2,3,4,5-tetrahydrodipicolinate + NAD(+) + H2O = (2S,4S)-4-hydroxy-2,3,4,5-tetrahydrodipicolinate + NADH + H(+). It carries out the reaction (S)-2,3,4,5-tetrahydrodipicolinate + NADP(+) + H2O = (2S,4S)-4-hydroxy-2,3,4,5-tetrahydrodipicolinate + NADPH + H(+). It participates in amino-acid biosynthesis; L-lysine biosynthesis via DAP pathway; (S)-tetrahydrodipicolinate from L-aspartate: step 4/4. Catalyzes the conversion of 4-hydroxy-tetrahydrodipicolinate (HTPA) to tetrahydrodipicolinate. This is 4-hydroxy-tetrahydrodipicolinate reductase from Alkaliphilus metalliredigens (strain QYMF).